The sequence spans 243 residues: Adenylate dimethylallyltransferase (243 aa).

The catalysed reaction is dimethylallyl diphosphate + AMP = N(6)-(dimethylallyl)adenosine 5'-phosphate + diphosphate. Functionally, transfers dimethylallyl groups to AMP as part of the biosynthesis of cytokinin phytohormones. This chain is Adenylate dimethylallyltransferase (tzs), found in Agrobacterium tumefaciens (strain T37).